We begin with the raw amino-acid sequence, 58 residues long: Bowman-Birk type wound-induced trypsin inhibitor (58 aa).

Cystine bridges form between cysteine 4-cysteine 57, cysteine 5-cysteine 20, cysteine 8-cysteine 53, cysteine 10-cysteine 18, cysteine 27-cysteine 34, cysteine 31-cysteine 46, and cysteine 36-cysteine 44.

This sequence belongs to the Bowman-Birk serine protease inhibitor family.

The sequence is that of Bowman-Birk type wound-induced trypsin inhibitor from Medicago sativa (Alfalfa).